The following is a 176-amino-acid chain: DNA repair RAD52-like protein 1, mitochondrial (176 aa).

A mitochondrion-targeting transit peptide spans 1-37 (MAGLGLRLKAAKWTLRSGSGAVSREWSSEMGKGVRRF).

The protein belongs to the RAD52 family. In terms of assembly, interacts with WHY2. Expressed in root vascular tissue, tips of primary and secondary roots, young leaves, hydathodes, stomatal guard cells, cauline leaves, flower buds, stipules, carpels, pistils and anther filaments.

Its subcellular location is the mitochondrion. It is found in the nucleus. Plant-specific single-stranded DNA-binding protein required for efficient heterologous recombination-dependent DNA repair in nuclear and mitochondrial compartments. Forms large nucleo-protein complexes with WHY2 in mitochondria. Binds ssDNA with high affinity, but with little sequence specificity. Involved in double-stranded DNA break repair. Involved in the hydrolytic splicing pathway in mitochondrion. Facilitates the excision of two cis-spliced group II introns, NAD1 intron 2 and NAD2 intron 1. The sequence is that of DNA repair RAD52-like protein 1, mitochondrial from Arabidopsis thaliana (Mouse-ear cress).